The primary structure comprises 138 residues: MTAIFLMSMLFGLACGQAMSFCIPTEYMMHVERKECAYCLTINTTICAGYCMTRDFNGKLFLPKYALSQDVCTYRDFMYKTVEIPGCPHHVTPYFSYPVAISCKCGKCNTDYSDCIHEAIKTNYCTKPQKSYVLEFSI.

An N-terminal signal peptide occupies residues 1-20 (MTAIFLMSMLFGLACGQAMS). Cystine bridges form between C22-C72, C36-C87, C39-C125, C47-C103, C51-C105, and C108-C115. N-linked (GlcNAc...) asparagine glycosylation occurs at N43. A propeptide spanning residues 133–138 (VLEFSI) is cleaved from the precursor.

This sequence belongs to the glycoprotein hormones subunit beta family. In terms of assembly, heterodimer of a common alpha chain and a unique beta chain which confers biological specificity to thyrotropin, lutropin, follitropin and gonadotropin.

It localises to the secreted. In terms of biological role, indispensable for the control of thyroid structure and metabolism. The polypeptide is Thyrotropin subunit beta (TSHB) (Sus scrofa (Pig)).